Here is a 291-residue protein sequence, read N- to C-terminus: Pyridoxal 5'-phosphate synthase subunit PdxS (291 aa).

Asp23 lines the D-ribose 5-phosphate pocket. Catalysis depends on Lys80, which acts as the Schiff-base intermediate with D-ribose 5-phosphate. Position 152 (Gly152) interacts with D-ribose 5-phosphate. D-glyceraldehyde 3-phosphate is bound at residue Arg164. Residues Gly213 and 234-235 each bind D-ribose 5-phosphate; that span reads GS.

Belongs to the PdxS/SNZ family. In terms of assembly, in the presence of PdxT, forms a dodecamer of heterodimers.

The enzyme catalyses aldehydo-D-ribose 5-phosphate + D-glyceraldehyde 3-phosphate + L-glutamine = pyridoxal 5'-phosphate + L-glutamate + phosphate + 3 H2O + H(+). It functions in the pathway cofactor biosynthesis; pyridoxal 5'-phosphate biosynthesis. Functionally, catalyzes the formation of pyridoxal 5'-phosphate from ribose 5-phosphate (RBP), glyceraldehyde 3-phosphate (G3P) and ammonia. The ammonia is provided by the PdxT subunit. Can also use ribulose 5-phosphate and dihydroxyacetone phosphate as substrates, resulting from enzyme-catalyzed isomerization of RBP and G3P, respectively. This is Pyridoxal 5'-phosphate synthase subunit PdxS from Haemophilus influenzae (strain PittGG).